We begin with the raw amino-acid sequence, 91 residues long: Small ribosomal subunit protein uS17 (91 aa).

It belongs to the universal ribosomal protein uS17 family. As to quaternary structure, part of the 30S ribosomal subunit.

One of the primary rRNA binding proteins, it binds specifically to the 5'-end of 16S ribosomal RNA. The polypeptide is Small ribosomal subunit protein uS17 (Saccharopolyspora erythraea (strain ATCC 11635 / DSM 40517 / JCM 4748 / NBRC 13426 / NCIMB 8594 / NRRL 2338)).